A 133-amino-acid chain; its full sequence is Large ribosomal subunit protein bL17 (133 aa).

It belongs to the bacterial ribosomal protein bL17 family. As to quaternary structure, part of the 50S ribosomal subunit. Contacts protein L32.

This chain is Large ribosomal subunit protein bL17, found in Thermodesulfovibrio yellowstonii (strain ATCC 51303 / DSM 11347 / YP87).